The primary structure comprises 639 residues: Phosphatidylinositol 3,4,5-trisphosphate 3-phosphatase cnrN (639 aa).

A Phosphatase tensin-type domain is found at Phe-20–Ser-190. Catalysis depends on Cys-129, which acts as the Phosphocysteine intermediate. In terms of domain architecture, C2 tensin-type spans Glu-195–Asn-350. Disordered stretches follow at residues Ile-243–Asn-265, Asn-395–Pro-429, Ser-451–Ser-498, Asn-519–Lys-567, and Phe-598–Glu-628. Low complexity-rich tracts occupy residues Asn-244–Asn-265, Asn-395–Ser-424, Asn-458–Ser-486, and Asn-519–Asn-554. Over residues Phe-598 to Glu-608 the composition is skewed to polar residues. The segment covering Leu-619–Glu-628 has biased composition (basic and acidic residues).

The cofactor is Mg(2+).

The catalysed reaction is a 1,2-diacyl-sn-glycero-3-phospho-(1D-myo-inositol-3,4,5-trisphosphate) + H2O = a 1,2-diacyl-sn-glycero-3-phospho-(1D-myo-inositol-4,5-bisphosphate) + phosphate. Protein phosphatase that negatively regulates PI3K-dependent pathways. Regulates cAMP signal transduction to control territory size. During development, a lawn of Dictyostelium cells breaks up into territories where cells aggregate in dendritic streams to form groups of 20'000 cells. This chain is Phosphatidylinositol 3,4,5-trisphosphate 3-phosphatase cnrN (cnrN), found in Dictyostelium discoideum (Social amoeba).